The chain runs to 83 residues: Short neurotoxin 1 (83 aa).

Residues 1–21 (MKTLLLTLVVVTIVCLDLGYT) form the signal peptide. 4 disulfides stabilise this stretch: Cys24/Cys45, Cys38/Cys62, Cys64/Cys75, and Cys76/Cys81.

Belongs to the three-finger toxin family. Short-chain subfamily. Type I alpha-neurotoxin sub-subfamily. Expressed by the venom gland.

It is found in the secreted. In terms of biological role, binds to muscle nicotinic acetylcholine receptor (nAChR) and inhibit acetylcholine from binding to the receptor, thereby impairing neuromuscular transmission. In Oxyuranus scutellatus scutellatus (Australian taipan), this protein is Short neurotoxin 1.